A 500-amino-acid chain; its full sequence is MNDFPWLTIIVVFPISAGSLMLFLPHRGNKVNKWYTICICILELLLTTYAFCYNFKMDDPLIQLSEDYKWIDFFDFYWRMGIDGLSIGTILLTGFITTLATLAAFPVTRDSRFFHFLMLAMYSGQIGSFSSRDLLLFFIMWELELIPVYLLLSMWGGKKRLYSATKFILYTAGSSIFLLIGVLGISLYGSNEPTLNLELLANKSYPVTLEILFYIGFLIAFAVKSPIIPLHTWLPDTHGEAHYSTCMLLAGILLKMGAYGLVRINMELLPHAHSMFSPWLLVVGTIQIIYAASTSPGQRNLKKRIAYSSVSHMGFIIIGISSITDPGLNGAILQIISHGFIGAALFFLAGTSYDRIRLVYLDEMGGMAISIPKIFTMFTILSMASLALPGMSGFIAEFIVFFGIITSQKYFLISKIFIIFVMAIGMILTPIYLLSMLRQMFYGYKLINIKNFSFFDSGPRELFLSISILLPIIGIGIYPDFVLSLASDKVESILSNYFYG.

A run of 14 helical transmembrane segments spans residues 4–24 (FPWLTIIVVFPISAGSLMLFL), 35–55 (YTICICILELLLTTYAFCYNF), 87–107 (IGTILLTGFITTLATLAAFPV), 113–130 (FFHFLMLAMYSGQIGSFS), 134–154 (LLLFFIMWELELIPVYLLLSM), 167–187 (FILYTAGSSIFLLIGVLGISL), 211–231 (ILFYIGFLIAFAVKSPIIPLH), 242–262 (HYSTCMLLAGILLKMGAYGLV), 272–292 (AHSMFSPWLLVVGTIQIIYAA), 305–325 (IAYSSVSHMGFIIIGISSITD), 330–350 (GAILQIISHGFIGAALFFLAG), 386–406 (LALPGMSGFIAEFIVFFGIIT), 416–436 (IFIIFVMAIGMILTPIYLLSM), and 462–482 (LFLSISILLPIIGIGIYPDFV).

This sequence belongs to the complex I subunit 4 family.

It localises to the plastid. The protein localises to the chloroplast thylakoid membrane. The enzyme catalyses a plastoquinone + NADH + (n+1) H(+)(in) = a plastoquinol + NAD(+) + n H(+)(out). It catalyses the reaction a plastoquinone + NADPH + (n+1) H(+)(in) = a plastoquinol + NADP(+) + n H(+)(out). The protein is NAD(P)H-quinone oxidoreductase chain 4, chloroplastic (ndhD) of Arabidopsis thaliana (Mouse-ear cress).